Reading from the N-terminus, the 146-residue chain is Cytochrome c-type biogenesis protein CcmE (146 aa).

Topologically, residues 1-8 are cytoplasmic; that stretch reads MNPRRKKR. The chain crosses the membrane as a helical; Signal-anchor for type II membrane protein span at residues 9–29; sequence LGLILALVLGASATVGLMLYA. Residues 30-146 lie on the Periplasmic side of the membrane; it reads LNQNMDLFYT…EVAEAMKKTH (117 aa). Heme contacts are provided by histidine 129 and tyrosine 133.

The protein belongs to the CcmE/CycJ family.

Its subcellular location is the cell inner membrane. In terms of biological role, heme chaperone required for the biogenesis of c-type cytochromes. Transiently binds heme delivered by CcmC and transfers the heme to apo-cytochromes in a process facilitated by CcmF and CcmH. This Aliivibrio salmonicida (strain LFI1238) (Vibrio salmonicida (strain LFI1238)) protein is Cytochrome c-type biogenesis protein CcmE.